The sequence spans 395 residues: Succinyl-diaminopimelate desuccinylase (395 aa).

Histidine 74 lines the Zn(2+) pocket. Aspartate 76 is an active-site residue. Position 107 (aspartate 107) interacts with Zn(2+). Residue glutamate 141 is the Proton acceptor of the active site. Zn(2+) contacts are provided by glutamate 142, glutamate 170, and histidine 368.

This sequence belongs to the peptidase M20A family. DapE subfamily. As to quaternary structure, homodimer. It depends on Zn(2+) as a cofactor. The cofactor is Co(2+).

The enzyme catalyses N-succinyl-(2S,6S)-2,6-diaminopimelate + H2O = (2S,6S)-2,6-diaminopimelate + succinate. The protein operates within amino-acid biosynthesis; L-lysine biosynthesis via DAP pathway; LL-2,6-diaminopimelate from (S)-tetrahydrodipicolinate (succinylase route): step 3/3. In terms of biological role, catalyzes the hydrolysis of N-succinyl-L,L-diaminopimelic acid (SDAP), forming succinate and LL-2,6-diaminopimelate (DAP), an intermediate involved in the bacterial biosynthesis of lysine and meso-diaminopimelic acid, an essential component of bacterial cell walls. The sequence is that of Succinyl-diaminopimelate desuccinylase from Brucella abortus (strain S19).